A 258-amino-acid chain; its full sequence is Regulatory protein RecX (258 aa).

The protein belongs to the RecX family.

It localises to the cytoplasm. Functionally, modulates RecA activity. The chain is Regulatory protein RecX from Streptococcus uberis (strain ATCC BAA-854 / 0140J).